The primary structure comprises 369 residues: Aspartate-semialdehyde dehydrogenase (369 aa).

Residues 11–14, 38–39, and Gln-75 each bind NADP(+); these read RGMV and TS. Arg-104 is a phosphate binding site. Residue Cys-137 is the Acyl-thioester intermediate of the active site. Position 164 (Gln-164) interacts with substrate. NADP(+) is bound by residues 167–168 and Pro-195; that span reads SG. Glu-243 provides a ligand contact to substrate. Residue Lys-246 participates in phosphate binding. Residue Arg-269 coordinates substrate. His-276 (proton acceptor) is an active-site residue. NADP(+) is bound at residue Gln-352.

The protein belongs to the aspartate-semialdehyde dehydrogenase family. Homodimer.

The catalysed reaction is L-aspartate 4-semialdehyde + phosphate + NADP(+) = 4-phospho-L-aspartate + NADPH + H(+). The protein operates within amino-acid biosynthesis; L-lysine biosynthesis via DAP pathway; (S)-tetrahydrodipicolinate from L-aspartate: step 2/4. It functions in the pathway amino-acid biosynthesis; L-methionine biosynthesis via de novo pathway; L-homoserine from L-aspartate: step 2/3. Its pathway is amino-acid biosynthesis; L-threonine biosynthesis; L-threonine from L-aspartate: step 2/5. Catalyzes the NADPH-dependent formation of L-aspartate-semialdehyde (L-ASA) by the reductive dephosphorylation of L-aspartyl-4-phosphate. This is Aspartate-semialdehyde dehydrogenase from Buchnera aphidicola subsp. Baizongia pistaciae (strain Bp).